The following is a 147-amino-acid chain: C-glycoside deglycosidase beta subunit (147 aa).

The protein belongs to the C-glycoside deglycosidase beta subunit family. Heterooctamer composed of four alpha subunits (DfgA) and four beta subunits (DfgB). Mn(2+) serves as cofactor.

It carries out the reaction 3''-dehydroisoorientin = 1,5-anhydro-D-erythro-hex-1-en-3-ulose + luteolin. The catalysed reaction is 3''-dehydroisovitexin = 1,5-anhydro-D-erythro-hex-1-en-3-ulose + apigenin. Its activity is regulated as follows. Activity is strongly reduced in the presence of chelating agents. Functionally, carbon-carbon bond-cleaving enzyme which participates in the metabolism of C-glycosides. Acts on the C6-glycosylated compounds 3''-dehydroisoorientin (3''-oxo-homoorientin) and 3''-dehydroisovitexin (3''-oxo-isovitexin). The protein is C-glycoside deglycosidase beta subunit of Eubacterium cellulosolvens (strain ATCC 43171 / JCM 9499 / 6) (Cillobacterium cellulosolvens).